Reading from the N-terminus, the 343-residue chain is Dihydroorotate dehydrogenase (quinone) (343 aa).

FMN contacts are provided by residues 61–65 (AGLDK) and T85. Position 65 (K65) interacts with substrate. 110–114 (NRMGF) contacts substrate. Residues N138 and N171 each contribute to the FMN site. N171 provides a ligand contact to substrate. S174 acts as the Nucleophile in catalysis. N176 contributes to the substrate binding site. K216 and T244 together coordinate FMN. 245–246 (NT) contributes to the substrate binding site. Residues G267, G296, and 317-318 (YS) each bind FMN.

Belongs to the dihydroorotate dehydrogenase family. Type 2 subfamily. Monomer. The cofactor is FMN.

It localises to the cell membrane. The enzyme catalyses (S)-dihydroorotate + a quinone = orotate + a quinol. The protein operates within pyrimidine metabolism; UMP biosynthesis via de novo pathway; orotate from (S)-dihydroorotate (quinone route): step 1/1. Its function is as follows. Catalyzes the conversion of dihydroorotate to orotate with quinone as electron acceptor. The protein is Dihydroorotate dehydrogenase (quinone) of Stutzerimonas stutzeri (strain A1501) (Pseudomonas stutzeri).